A 146-amino-acid polypeptide reads, in one-letter code: VHWTAEEKALINAYWGKVDVGSVGGETLANLLVVYPWTQRFFEDFGNLSTPSAILNNPKXXXXXXXVITSFGDALKNLDNVXXXXXKLSEYHCNKLHVDPVNFRLLGDVLITLSAANFGKXXXXXXXXXXXXLVGVVAHALARRYH.

The region spanning His-2–His-146 is the Globin domain. Residue His-92 coordinates heme b.

This sequence belongs to the globin family. In terms of assembly, heterotetramer of two alpha chains and two beta chains. Red blood cells.

Involved in oxygen transport from the lung to the various peripheral tissues. The polypeptide is Hemoglobin subunit beta-1 (Saara hardwickii (Indian spiny-tailed lizard)).